We begin with the raw amino-acid sequence, 516 residues long: Cytochrome P450 6d1 (516 aa).

Residue cysteine 461 coordinates heme.

Belongs to the cytochrome P450 family. The cofactor is heme.

Its subcellular location is the endoplasmic reticulum membrane. It is found in the microsome membrane. Metabolizes pyrethroid insecticides and other xenobiotics. The chain is Cytochrome P450 6d1 (CYP6D1) from Musca domestica (House fly).